Consider the following 85-residue polypeptide: Large ribosomal subunit protein bL31B (85 aa).

This sequence belongs to the bacterial ribosomal protein bL31 family. Type B subfamily. In terms of assembly, part of the 50S ribosomal subunit.

The sequence is that of Large ribosomal subunit protein bL31B from Porphyromonas gingivalis (strain ATCC 33277 / DSM 20709 / CIP 103683 / JCM 12257 / NCTC 11834 / 2561).